We begin with the raw amino-acid sequence, 680 residues long: Anosmin-1 (680 aa).

The first 24 residues, 1-24 (MVPGVPGAVLTLCLWLAASSGCLA), serve as a signal peptide directing secretion. 5 disulfides stabilise this stretch: Cys49-Cys83, Cys53-Cys77, Cys86-Cys105, Cys90-Cys101, and Cys116-Cys120. An N-linked (GlcNAc...) asparagine glycan is attached at Asn71. One can recognise a WAP domain in the interval 127–176 (LLVKQGDCPAPEKASGFAAACVESCEVDNECSGVKKCCSNGCGHTCQVPK). 4 consecutive Fibronectin type-III domains span residues 186-287 (PRKE…SKDP), 292-400 (APAN…THAT), 425-523 (PTRP…TPPC), and 550-658 (KPEN…LPPS). 5 N-linked (GlcNAc...) asparagine glycosylation sites follow: Asn209, Asn300, Asn470, Asn553, and Asn564. Residues 642 to 680 (EGPATIKTFRTPELPPSSAHRSHLKHRHPHHYKPSPERY) are disordered. The segment covering 661–674 (HRSHLKHRHPHHYK) has biased composition (basic residues).

As to quaternary structure, interacts with FGFR1; this interaction does not interfere with FGF2-binding to FGFR1. Binds heparin. Heparin may promote or interfere with ANOS1-FGFR1-FGF2 complex formation depending on the sequential order of its binding to the various constituents. For instance, heparin-ANOS1 interaction favors subsequent binding to pre-existing binary FGFR1-FGF2 complex, while heparin-FGF2 complex does not interact with ANOS1-FGFR1. Post-translationally, N-glycosylated. May be proteolytically cleaved at the cell surface and released from the cell surface. In terms of tissue distribution, expressed in the cerebellum (at protein level).

It is found in the cell membrane. Its subcellular location is the secreted. Functionally, has a dual branch-promoting and guidance activity, which may play an important role in the patterning of mitral and tufted cell collaterals to the olfactory cortex. Chemoattractant for fetal olfactory epithelial cells. The protein is Anosmin-1 of Homo sapiens (Human).